Here is a 290-residue protein sequence, read N- to C-terminus: Shikimate dehydrogenase (NADP(+)) (290 aa).

Shikimate contacts are provided by residues 18-20 (SYS) and threonine 66. Residue lysine 70 is the Proton acceptor of the active site. Glutamate 82 is a binding site for NADP(+). Asparagine 91 and aspartate 106 together coordinate shikimate. NADP(+)-binding positions include 130–134 (GSGGA) and methionine 229. A shikimate-binding site is contributed by tyrosine 231. An NADP(+)-binding site is contributed by glycine 252.

The protein belongs to the shikimate dehydrogenase family. Homodimer.

The catalysed reaction is shikimate + NADP(+) = 3-dehydroshikimate + NADPH + H(+). It participates in metabolic intermediate biosynthesis; chorismate biosynthesis; chorismate from D-erythrose 4-phosphate and phosphoenolpyruvate: step 4/7. In terms of biological role, involved in the biosynthesis of the chorismate, which leads to the biosynthesis of aromatic amino acids. Catalyzes the reversible NADPH linked reduction of 3-dehydroshikimate (DHSA) to yield shikimate (SA). The polypeptide is Shikimate dehydrogenase (NADP(+)) (Chlorobium phaeovibrioides (strain DSM 265 / 1930) (Prosthecochloris vibrioformis (strain DSM 265))).